A 505-amino-acid polypeptide reads, in one-letter code: Maturase K (505 aa).

It belongs to the intron maturase 2 family. MatK subfamily.

It localises to the plastid. The protein localises to the chloroplast. Functionally, usually encoded in the trnK tRNA gene intron. Probably assists in splicing its own and other chloroplast group II introns. The chain is Maturase K from Gomphrena pulchella (Globe amaranth).